A 318-amino-acid polypeptide reads, in one-letter code: Lipoyl synthase (318 aa).

Residues Cys-64, Cys-69, Cys-75, Cys-90, Cys-94, Cys-97, and Ser-304 each coordinate [4Fe-4S] cluster. One can recognise a Radical SAM core domain in the interval 76–293 (FSGGTATFMI…AEEGYKMGFK (218 aa)).

It belongs to the radical SAM superfamily. Lipoyl synthase family. It depends on [4Fe-4S] cluster as a cofactor.

The protein resides in the cytoplasm. It catalyses the reaction [[Fe-S] cluster scaffold protein carrying a second [4Fe-4S](2+) cluster] + N(6)-octanoyl-L-lysyl-[protein] + 2 oxidized [2Fe-2S]-[ferredoxin] + 2 S-adenosyl-L-methionine + 4 H(+) = [[Fe-S] cluster scaffold protein] + N(6)-[(R)-dihydrolipoyl]-L-lysyl-[protein] + 4 Fe(3+) + 2 hydrogen sulfide + 2 5'-deoxyadenosine + 2 L-methionine + 2 reduced [2Fe-2S]-[ferredoxin]. The protein operates within protein modification; protein lipoylation via endogenous pathway; protein N(6)-(lipoyl)lysine from octanoyl-[acyl-carrier-protein]: step 2/2. Catalyzes the radical-mediated insertion of two sulfur atoms into the C-6 and C-8 positions of the octanoyl moiety bound to the lipoyl domains of lipoate-dependent enzymes, thereby converting the octanoylated domains into lipoylated derivatives. The chain is Lipoyl synthase from Pseudomonas syringae pv. tomato (strain ATCC BAA-871 / DC3000).